Consider the following 279-residue polypeptide: Large ribosomal subunit protein uL2 (279 aa).

Residues 222-279 (GMAMNPVDHPMGGGEGKSKSGGGRRHPKSPWGQLAKGLKTRNKKKASQKLIVRGRNAK) are disordered. Over residues 232–242 (MGGGEGKSKSG) the composition is skewed to gly residues. Residues 259–268 (LKTRNKKKAS) are compositionally biased toward basic residues.

Belongs to the universal ribosomal protein uL2 family. As to quaternary structure, part of the 50S ribosomal subunit. Forms a bridge to the 30S subunit in the 70S ribosome.

Functionally, one of the primary rRNA binding proteins. Required for association of the 30S and 50S subunits to form the 70S ribosome, for tRNA binding and peptide bond formation. It has been suggested to have peptidyltransferase activity; this is somewhat controversial. Makes several contacts with the 16S rRNA in the 70S ribosome. In Chlorobium phaeobacteroides (strain DSM 266 / SMG 266 / 2430), this protein is Large ribosomal subunit protein uL2.